The sequence spans 613 residues: Phosphomethylpyrimidine synthase (613 aa).

Substrate contacts are provided by residues asparagine 215, methionine 244, tyrosine 273, histidine 309, 329–331, 370–373, and glutamate 409; these read SRG and DGLR. Zn(2+) is bound at residue histidine 413. Substrate is bound at residue tyrosine 436. Histidine 477 is a Zn(2+) binding site. Positions 557, 560, and 565 each coordinate [4Fe-4S] cluster.

It belongs to the ThiC family. As to quaternary structure, homodimer. Requires [4Fe-4S] cluster as cofactor.

The catalysed reaction is 5-amino-1-(5-phospho-beta-D-ribosyl)imidazole + S-adenosyl-L-methionine = 4-amino-2-methyl-5-(phosphooxymethyl)pyrimidine + CO + 5'-deoxyadenosine + formate + L-methionine + 3 H(+). It participates in cofactor biosynthesis; thiamine diphosphate biosynthesis. Functionally, catalyzes the synthesis of the hydroxymethylpyrimidine phosphate (HMP-P) moiety of thiamine from aminoimidazole ribotide (AIR) in a radical S-adenosyl-L-methionine (SAM)-dependent reaction. This chain is Phosphomethylpyrimidine synthase, found in Paramagnetospirillum magneticum (strain ATCC 700264 / AMB-1) (Magnetospirillum magneticum).